We begin with the raw amino-acid sequence, 101 residues long: NAD(P)H-quinone oxidoreductase subunit 4L, chloroplastic (101 aa).

Transmembrane regions (helical) follow at residues 2 to 22 (MLEHVLVLSAYLFSFVLYGLI), 32 to 52 (MCLELILNAVNLNFVTFSDFF), and 61 to 81 (IFSIFVIAIAAAEAAIGLAIV).

Belongs to the complex I subunit 4L family. NDH is composed of at least 16 different subunits, 5 of which are encoded in the nucleus.

It is found in the plastid. Its subcellular location is the chloroplast thylakoid membrane. The catalysed reaction is a plastoquinone + NADH + (n+1) H(+)(in) = a plastoquinol + NAD(+) + n H(+)(out). The enzyme catalyses a plastoquinone + NADPH + (n+1) H(+)(in) = a plastoquinol + NADP(+) + n H(+)(out). In terms of biological role, NDH shuttles electrons from NAD(P)H:plastoquinone, via FMN and iron-sulfur (Fe-S) centers, to quinones in the photosynthetic chain and possibly in a chloroplast respiratory chain. The immediate electron acceptor for the enzyme in this species is believed to be plastoquinone. Couples the redox reaction to proton translocation, and thus conserves the redox energy in a proton gradient. In Guizotia abyssinica (Niger), this protein is NAD(P)H-quinone oxidoreductase subunit 4L, chloroplastic.